The primary structure comprises 336 residues: Vacuolar protein sorting-associated protein 26B (336 aa).

Phosphoserine is present on residues Ser-302, Ser-304, and Ser-319.

Belongs to the VPS26 family. Component of the heterotrimeric retromer cargo-selective complex (CSC), also described as vacuolar protein sorting VPS subcomplex (VPS,) formed by VPS26 (VPS26A or VPS26B), VPS29 and VPS35. The CSC has a highly elongated structure with VPS26 and VPS29 binding independently at opposite distal ends of VPS35 as central platform. The CSC is believed to associate with variable sorting nexins to form functionally distinct retromer complex variants. The originally described retromer complex (also called SNX-BAR retromer) is a pentamer containing the CSC and a heterodimeric membrane-deforming subcomplex formed between SNX1 or SNX2 and SNX5 or SNX6 (also called SNX-BAR subcomplex); the respective CSC and SNX-BAR subcomplexes associate with low affinity. The CSC associates with SNX3 to form a SNX3-retromer complex. The CSC associates with SNX27, the WASH complex and the SNX-BAR subcomplex to form the SNX27-retromer complex. Interacts with VPS29, VPS35, TBC1D5, GOLPH3, SNX27.

The protein localises to the cytoplasm. The protein resides in the membrane. Its subcellular location is the early endosome. It is found in the late endosome. Its function is as follows. Acts as a component of the retromer cargo-selective complex (CSC). The CSC is believed to be the core functional component of retromer or respective retromer complex variants acting to prevent missorting of selected transmembrane cargo proteins into the lysosomal degradation pathway. The recruitment of the CSC to the endosomal membrane involves RAB7A and SNX3. The SNX-BAR retromer mediates retrograde transport of cargo proteins from endosomes to the trans-Golgi network (TGN) and is involved in endosome-to-plasma membrane transport for cargo protein recycling. The SNX3-retromer mediates the retrograde transport of WLS distinct from the SNX-BAR retromer pathway. The SNX27-retromer is believed to be involved in endosome-to-plasma membrane trafficking and recycling of a broad spectrum of cargo proteins. The CSC seems to act as recruitment hub for other proteins, such as the WASH complex and TBC1D5. May be involved in retrograde transport of SORT1 but not of IGF2R. Acts redundantly with VSP26A in SNX-27 mediated endocytic recycling of SLC2A1/GLUT1. This Homo sapiens (Human) protein is Vacuolar protein sorting-associated protein 26B (VPS26B).